The chain runs to 688 residues: Translation initiation factor IF-2 (688 aa).

2 stretches are compositionally biased toward basic and acidic residues: residues 53-62 and 86-95; these read GKEKSEKTKE and KRDDKNEKVN. Residues 53-100 are disordered; that stretch reads GKEKSEKTKEEDDEIETTAKNPIKESMNNKKSNKRDDKNEKVNTENAE. Residues 187–354 form the tr-type G domain; sequence KRSPIITVMG…MILLSSEILE (168 aa). The interval 196–203 is G1; it reads GHVDHGKT. 196–203 contacts GTP; sequence GHVDHGKT. The tract at residues 221–225 is G2; it reads GITQH. The G3 stretch occupies residues 242–245; that stretch reads DTPG. GTP contacts are provided by residues 242–246 and 296–299; these read DTPGH and NKID. Residues 296–299 are G4; that stretch reads NKID. The tract at residues 332-334 is G5; that stretch reads SAH.

It belongs to the TRAFAC class translation factor GTPase superfamily. Classic translation factor GTPase family. IF-2 subfamily.

Its subcellular location is the cytoplasm. Its function is as follows. One of the essential components for the initiation of protein synthesis. Protects formylmethionyl-tRNA from spontaneous hydrolysis and promotes its binding to the 30S ribosomal subunits. Also involved in the hydrolysis of GTP during the formation of the 70S ribosomal complex. The chain is Translation initiation factor IF-2 from Clostridium botulinum (strain Loch Maree / Type A3).